Reading from the N-terminus, the 194-residue chain is Molybdenum cofactor guanylyltransferase (194 aa).

GTP is bound by residues 12-14 (LAG), Lys-25, Asn-53, Asp-70, and Asp-100. Mg(2+) is bound at residue Asp-100.

This sequence belongs to the MobA family. In terms of assembly, monomer. It depends on Mg(2+) as a cofactor.

It localises to the cytoplasm. The catalysed reaction is Mo-molybdopterin + GTP + H(+) = Mo-molybdopterin guanine dinucleotide + diphosphate. Transfers a GMP moiety from GTP to Mo-molybdopterin (Mo-MPT) cofactor (Moco or molybdenum cofactor) to form Mo-molybdopterin guanine dinucleotide (Mo-MGD) cofactor. This Aliivibrio fischeri (strain MJ11) (Vibrio fischeri) protein is Molybdenum cofactor guanylyltransferase.